A 302-amino-acid polypeptide reads, in one-letter code: Urease accessory protein UreD 2 (302 aa).

This sequence belongs to the UreD family. UreD, UreF and UreG form a complex that acts as a GTP-hydrolysis-dependent molecular chaperone, activating the urease apoprotein by helping to assemble the nickel containing metallocenter of UreC. The UreE protein probably delivers the nickel.

The protein resides in the cytoplasm. Its function is as follows. Required for maturation of urease via the functional incorporation of the urease nickel metallocenter. This Brucella melitensis biotype 1 (strain ATCC 23456 / CCUG 17765 / NCTC 10094 / 16M) protein is Urease accessory protein UreD 2.